Reading from the N-terminus, the 261-residue chain is Bidirectional sugar transporter SWEET1b (261 aa).

The Extracellular segment spans residues 1 to 6 (MEDLAK). A helical membrane pass occupies residues 7-27 (FLFGVSGNVIALFLFLSPVPT). The MtN3/slv 1 domain occupies 7 to 95 (FLFGVSGNVI…VVFLVFASTH (89 aa)). At 28–42 (FWRIIRRKSTEDFSG) the chain is on the cytoplasmic side. Residues 43-63 (VPYNMTLINCLLSAWYGLPFV) form a helical membrane-spanning segment. The Extracellular portion of the chain corresponds to 64 to 71 (SPNNILVS). The helical transmembrane segment at 72–92 (TINGAGAVIETAYVVVFLVFA) threads the bilayer. Residues 93 to 101 (STHKTRLRT) are Cytoplasmic-facing. Residues 102 to 122 (LGLAAAVASVFAAVALVSLLA) form a helical membrane-spanning segment. At 123 to 129 (LHGQHRK) the chain is on the extracellular side. The helical transmembrane segment at 130–150 (LLCGVAATVCSICMYASPLSI) threads the bilayer. Positions 133 to 215 (GVAATVCSIC…VLYAIYRNNK (83 aa)) constitute a MtN3/slv 2 domain. Over 151–164 (MRLVIKTKSVEYMP) the chain is Cytoplasmic. The helical transmembrane segment at 165-185 (FLLSLAVFLCGTSWFIYGLLG) threads the bilayer. The Extracellular segment spans residues 186 to 189 (RDPF). A helical membrane pass occupies residues 190 to 210 (VTIPNGCGSFLGAVQLVLYAI). Residues 211-261 (YRNNKGAGGGSGGKQAGDDDVEMAEGRNNKVADGGAAEDDSTAGGKAGTEV) are Cytoplasmic-facing. A disordered region spans residues 218–261 (GGGSGGKQAGDDDVEMAEGRNNKVADGGAAEDDSTAGGKAGTEV).

It belongs to the SWEET sugar transporter family. As to quaternary structure, forms homodimers.

It is found in the cell membrane. The catalysed reaction is D-glucose(out) = D-glucose(in). It carries out the reaction D-galactose(in) = D-galactose(out). Mediates transport of sugars across the plasma membrane. Can transport glucose and galactose, but not fructose, mannose and sucrose. This is Bidirectional sugar transporter SWEET1b (SWEET1B) from Oryza sativa subsp. indica (Rice).